Consider the following 312-residue polypeptide: Nucleosome assembly protein 1-like 4 (312 aa).

Residues 24–78 (VETLKNKLQALAEQHVDVLESLAPSVRKRVDVLMEIQSQHDELEVKFFEEKAALE) are a coiled coil. The short motif at 45–60 (LAPSVRKRVDVLMEIQ) is the Nuclear export signal element. Positions 289-312 (DYGASWVDDEEEDDNNDEYSDEEA) are disordered.

It belongs to the nucleosome assembly protein (NAP) family.

It localises to the nucleus. Its subcellular location is the cytoplasm. Functionally, may modulate chromatin structure by regulation of nucleosome assembly/disassembly. The polypeptide is Nucleosome assembly protein 1-like 4 (Oryza sativa subsp. japonica (Rice)).